Reading from the N-terminus, the 314-residue chain is tRNA dimethylallyltransferase (314 aa).

11–18 (GPTASGKT) lines the ATP pocket. A substrate-binding site is contributed by 13-18 (TASGKT). Interaction with substrate tRNA regions lie at residues 36 to 39 (DSAL), 160 to 164 (QRINR), 241 to 246 (RCVGYR), and 274 to 281 (KRQITWLR).

This sequence belongs to the IPP transferase family. In terms of assembly, monomer. The cofactor is Mg(2+).

The catalysed reaction is adenosine(37) in tRNA + dimethylallyl diphosphate = N(6)-dimethylallyladenosine(37) in tRNA + diphosphate. Functionally, catalyzes the transfer of a dimethylallyl group onto the adenine at position 37 in tRNAs that read codons beginning with uridine, leading to the formation of N6-(dimethylallyl)adenosine (i(6)A). The polypeptide is tRNA dimethylallyltransferase (Glaesserella parasuis serovar 5 (strain SH0165) (Haemophilus parasuis)).